The sequence spans 493 residues: Glutamyl-tRNA(Gln) amidotransferase subunit A (493 aa).

Active-site charge relay system residues include lysine 78 and serine 158. Serine 182 serves as the catalytic Acyl-ester intermediate.

This sequence belongs to the amidase family. GatA subfamily. Heterotrimer of A, B and C subunits.

The catalysed reaction is L-glutamyl-tRNA(Gln) + L-glutamine + ATP + H2O = L-glutaminyl-tRNA(Gln) + L-glutamate + ADP + phosphate + H(+). In terms of biological role, allows the formation of correctly charged Gln-tRNA(Gln) through the transamidation of misacylated Glu-tRNA(Gln) in organisms which lack glutaminyl-tRNA synthetase. The reaction takes place in the presence of glutamine and ATP through an activated gamma-phospho-Glu-tRNA(Gln). The protein is Glutamyl-tRNA(Gln) amidotransferase subunit A of Methylorubrum extorquens (strain CM4 / NCIMB 13688) (Methylobacterium extorquens).